The chain runs to 99 residues: A-type ATP synthase subunit F (99 aa).

This sequence belongs to the V-ATPase F subunit family. In terms of assembly, has multiple subunits with at least A(3), B(3), C, D, E, F, H, I and proteolipid K(x).

The protein resides in the cell membrane. Its function is as follows. Component of the A-type ATP synthase that produces ATP from ADP in the presence of a proton gradient across the membrane. In Methanococcus aeolicus (strain ATCC BAA-1280 / DSM 17508 / OCM 812 / Nankai-3), this protein is A-type ATP synthase subunit F.